We begin with the raw amino-acid sequence, 489 residues long: WPP domain-interacting protein 1 (489 aa).

The interval 49 to 73 is disordered; that stretch reads SNSVELGKPMSFDSPGDGGGAYSPV. 3 consecutive short sequence motifs (nuclear localization signal) follow at residues 80–81, 83–84, and 104–105; these read RK, RR, and KR. Residues 195–264 form a disordered region; it reads PMISSGQGGN…DDAGGEGGES (70 aa). Basic and acidic residues predominate over residues 215–224; the sequence is GESVDFEKEN. Positions 323-446 form a coiled coil; it reads EIVTLVNNVE…QDLQNDCIEI (124 aa). The region spanning 459–489 is the KASH domain; the sequence is SYVLIQLVLLSTVVLLLLSQLLPEPDTVVPT. Residues 460–480 traverse the membrane as a helical segment; the sequence is YVLIQLVLLSTVVLLLLSQLL.

As to quaternary structure, homodimer and heterodimer with WIP2. Component of Ran complexes at least composed of WIT1 or WIT2, RANGAP1 or RANGAP2, and WIP1 or WIP2 or WIP3. Interacts with RANGAP1, RANGAP2, WPP1/MAF1, and WPP2/MAF2. Interacts with SUN1 and SUN2. Interacts with KIN1. Core component of the LINC complex which is composed of inner nuclear membrane SUN domain-containing proteins coupled to outer nuclear membrane WIP and WIT proteins. The LINC complex also involves nucleoskeletal proteins CRWN/LINC and possibly KAKU4 and the cytoskeletal myosin KAKU1. Interacts with WIT1 and SUN2. Interacts with WIT2. Interacts with SUN3. As to expression, expressed in seedlings, roots, stems, leaves, and flowers.

It is found in the nucleus envelope. The protein resides in the nucleus membrane. Mediates and enhances the nuclear envelope docking of RANGAP proteins mediated by WIT1 and WIT2 in the undifferentiated cells of root tips. As component of the SUN-WIP-WIT2-KAKU1 complex, mediates the transfer of cytoplasmic forces to the nuclear envelope (NE), leading to nuclear shape changes. This chain is WPP domain-interacting protein 1 (WIP1), found in Arabidopsis thaliana (Mouse-ear cress).